Here is a 248-residue protein sequence, read N- to C-terminus: DNA repair protein RecO (248 aa).

It belongs to the RecO family.

Functionally, involved in DNA repair and RecF pathway recombination. This Streptomyces griseus subsp. griseus (strain JCM 4626 / CBS 651.72 / NBRC 13350 / KCC S-0626 / ISP 5235) protein is DNA repair protein RecO.